The chain runs to 328 residues: Nitrilase (328 aa).

One can recognise a CN hydrolase domain in the interval 9 to 286 (VRVAAIQAEP…EGILYANVDV (278 aa)). Catalysis depends on Glu-49, which acts as the Proton acceptor. Lys-131 is a catalytic residue. Cys-166 serves as the catalytic Nucleophile.

Belongs to the carbon-nitrogen hydrolase superfamily. Nitrilase family.

It catalyses the reaction a nitrile + 2 H2O = a carboxylate + NH4(+). In terms of biological role, nitrilase that hydrolyzes preferentially 4-cyanopyridine. Is also able to hydrolyze some aliphatic nitriles, such as (R,S)-mandelonitrile. The chain is Nitrilase from Penicillium rubens (strain ATCC 28089 / DSM 1075 / NRRL 1951 / Wisconsin 54-1255) (Penicillium chrysogenum).